Reading from the N-terminus, the 239-residue chain is Small ribosomal subunit protein uS3 (239 aa).

Residues 40–108 form the KH type-2 domain; it reads RGLLEKELYS…VALNVQEVQN (69 aa). Residues 212 to 239 are disordered; the sequence is KPKARPELPKAEERPRRRRPAVRVKKEE. The span at 215–226 shows a compositional bias: basic and acidic residues; it reads ARPELPKAEERP. The segment covering 227 to 239 has biased composition (basic residues); it reads RRRRPAVRVKKEE.

It belongs to the universal ribosomal protein uS3 family. In terms of assembly, part of the 30S ribosomal subunit. Forms a tight complex with proteins S10 and S14.

In terms of biological role, binds the lower part of the 30S subunit head. Binds mRNA in the 70S ribosome, positioning it for translation. The polypeptide is Small ribosomal subunit protein uS3 (rpsC) (Thermus thermophilus (strain ATCC BAA-163 / DSM 7039 / HB27)).